Reading from the N-terminus, the 478-residue chain is Cytochrome c-552 (478 aa).

Positions 1-26 are cleaved as a signal peptide; the sequence is MTRIKINARRIFSLLIPFFFFTSVHA. H94 is a binding site for heme c. Heme is bound by residues C122, C125, and K126. Heme c is bound by residues C160, C163, H164, C209, C212, and H213. Positions 215, 216, 261, and 263 each coordinate Ca(2+). Y216 is a substrate binding site. Substrate is bound at residue H264. Heme c is bound by residues H275, C282, C285, H286, H301, C314, C317, H318, and H393.

This sequence belongs to the cytochrome c-552 family. Ca(2+) serves as cofactor. It depends on heme c as a cofactor.

The protein localises to the periplasm. The enzyme catalyses 6 Fe(III)-[cytochrome c] + NH4(+) + 2 H2O = 6 Fe(II)-[cytochrome c] + nitrite + 8 H(+). It participates in nitrogen metabolism; nitrate reduction (assimilation). Functionally, catalyzes the reduction of nitrite to ammonia, consuming six electrons in the process. The sequence is that of Cytochrome c-552 from Escherichia coli O6:H1 (strain CFT073 / ATCC 700928 / UPEC).